Reading from the N-terminus, the 211-residue chain is LexA repressor (211 aa).

The H-T-H motif DNA-binding region spans 27–47; the sequence is QTEIARAFGFKGVRAVQHHLD. Catalysis depends on for autocatalytic cleavage activity residues serine 131 and lysine 168.

This sequence belongs to the peptidase S24 family. As to quaternary structure, homodimer.

It catalyses the reaction Hydrolysis of Ala-|-Gly bond in repressor LexA.. In terms of biological role, represses a number of genes involved in the response to DNA damage (SOS response), including recA and lexA. In the presence of single-stranded DNA, RecA interacts with LexA causing an autocatalytic cleavage which disrupts the DNA-binding part of LexA, leading to derepression of the SOS regulon and eventually DNA repair. This chain is LexA repressor, found in Xylella fastidiosa (strain 9a5c).